The sequence spans 240 residues: Cysteine-rich venom protein catrin (240 aa).

The N-terminal stretch at 1-19 (MIAFIVLPILAAVLQQSSG) is a signal peptide. An SCP domain is found at 38 to 166 (VDLHNFLRRS…KYSYFYVCQY (129 aa)). Intrachain disulfides connect C75–C153, C92–C167, C148–C164, C186–C193, C189–C198, C202–C235, C211–C229, and C220–C233. The ShKT domain occupies 202 to 235 (CTKEDKYTNCKSLVQQAGCQDKQMQSDCPAICFC).

Belongs to the CRISP family. In terms of tissue distribution, expressed by the venom gland.

The protein resides in the secreted. Its function is as follows. Catrin-2 weakly blocks contraction of smooth muscle elicited by high potassium-induced depolarization, but does not block caffeine-stimulated contraction. Catrin-1 has no significant effect. May target voltage-gated calcium channels on smooth muscle. This Crotalus atrox (Western diamondback rattlesnake) protein is Cysteine-rich venom protein catrin.